The chain runs to 283 residues: Shikimate dehydrogenase (NADP(+)) (283 aa).

Shikimate-binding positions include 19-21 and Thr-66; that span reads SRS. The active-site Proton acceptor is the Lys-70. Residue Glu-82 participates in NADP(+) binding. The shikimate site is built by Asn-91 and Asp-107. NADP(+) contacts are provided by residues 133–137 and Ile-226; that span reads GAGGA. Tyr-228 contributes to the shikimate binding site. Gly-249 is a binding site for NADP(+).

This sequence belongs to the shikimate dehydrogenase family. Homodimer.

It catalyses the reaction shikimate + NADP(+) = 3-dehydroshikimate + NADPH + H(+). Its pathway is metabolic intermediate biosynthesis; chorismate biosynthesis; chorismate from D-erythrose 4-phosphate and phosphoenolpyruvate: step 4/7. Involved in the biosynthesis of the chorismate, which leads to the biosynthesis of aromatic amino acids. Catalyzes the reversible NADPH linked reduction of 3-dehydroshikimate (DHSA) to yield shikimate (SA). This is Shikimate dehydrogenase (NADP(+)) from Rhodospirillum rubrum (strain ATCC 11170 / ATH 1.1.1 / DSM 467 / LMG 4362 / NCIMB 8255 / S1).